The sequence spans 451 residues: Tubulin alpha-3 chain (451 aa).

Position 11 (Gln-11) interacts with GTP. At Lys-40 the chain carries N6-acetyllysine. Residues Glu-71, Gly-144, Thr-145, Thr-179, Asn-206, and Asn-228 each coordinate GTP. A Mg(2+)-binding site is contributed by Glu-71. Residue Glu-254 is part of the active site.

The protein belongs to the tubulin family. In terms of assembly, dimer of alpha and beta chains. A typical microtubule is a hollow water-filled tube with an outer diameter of 25 nm and an inner diameter of 15 nM. Alpha-beta heterodimers associate head-to-tail to form protofilaments running lengthwise along the microtubule wall with the beta-tubulin subunit facing the microtubule plus end conferring a structural polarity. Microtubules usually have 13 protofilaments but different protofilament numbers can be found in some organisms and specialized cells. The cofactor is Mg(2+). Post-translationally, undergoes a tyrosination/detyrosination cycle, the cyclic removal and re-addition of a C-terminal tyrosine residue by the enzymes tubulin tyrosine carboxypeptidase (TTCP) and tubulin tyrosine ligase (TTL), respectively. In terms of processing, acetylation of alpha chains at Lys-40 stabilizes microtubules and affects affinity and processivity of microtubule motors. This modification has a role in multiple cellular functions, ranging from cell motility, cell cycle progression or cell differentiation to intracellular trafficking and signaling.

The protein resides in the cytoplasm. The protein localises to the cytoskeleton. It catalyses the reaction GTP + H2O = GDP + phosphate + H(+). Functionally, tubulin is the major constituent of microtubules, a cylinder consisting of laterally associated linear protofilaments composed of alpha- and beta-tubulin heterodimers. Microtubules grow by the addition of GTP-tubulin dimers to the microtubule end, where a stabilizing cap forms. Below the cap, tubulin dimers are in GDP-bound state, owing to GTPase activity of alpha-tubulin. This is Tubulin alpha-3 chain (TUBA3) from Hordeum vulgare (Barley).